We begin with the raw amino-acid sequence, 160 residues long: Transcription elongation factor GreA (160 aa).

A coiled-coil region spans residues 1–72 (MAEKTYVMTL…QIQILETKIR (72 aa)).

The protein belongs to the GreA/GreB family.

Its function is as follows. Necessary for efficient RNA polymerase transcription elongation past template-encoded arresting sites. The arresting sites in DNA have the property of trapping a certain fraction of elongating RNA polymerases that pass through, resulting in locked ternary complexes. Cleavage of the nascent transcript by cleavage factors such as GreA or GreB allows the resumption of elongation from the new 3'terminus. GreA releases sequences of 2 to 3 nucleotides. The protein is Transcription elongation factor GreA of Streptococcus thermophilus (strain ATCC BAA-491 / LMD-9).